We begin with the raw amino-acid sequence, 111 residues long: BET1-like protein (111 aa).

Topologically, residues 1–86 (MADWTRAQSS…MARSGRDNRK (86 aa)) are cytoplasmic. A phosphoserine mark is found at S9 and S37. A t-SNARE coiled-coil homology domain is found at 15–77 (DILDRENKRM…TGSVKRFSTM (63 aa)). The helical; Anchor for type IV membrane protein transmembrane segment at 87-107 (LLCGMAVVLIVAFFILSYLLS) threads the bilayer. Residues 108-111 (RTRT) are Lumenal-facing.

Component of a SNARE complex consisting of STX5, YKT6, GOSR1 and BET1L. Interacts with STX5.

Its subcellular location is the golgi apparatus membrane. It is found in the golgi apparatus. The protein localises to the trans-Golgi network membrane. Its function is as follows. Vesicle SNARE required for targeting and fusion of retrograde transport vesicles with the Golgi complex. Required for the integrity of the Golgi complex. This Mus musculus (Mouse) protein is BET1-like protein.